A 57-amino-acid polypeptide reads, in one-letter code: U-Asilidin(1)-Mar2a (57 aa).

An N-terminal signal peptide occupies residues Met-1 to Ala-24. 3 disulfide bridges follow: Cys-28–Cys-44, Cys-35–Cys-48, and Cys-43–Cys-53.

This sequence belongs to the asilidin-1 family. Expressed by the venom gland. Exclusively expressed in the venom thoracic glands (and not in body tissues).

Its subcellular location is the secreted. Functionally, may act as a neurotoxin. The chain is U-Asilidin(1)-Mar2a from Machimus arthriticus (Breck robberfly).